Consider the following 175-residue polypeptide: Transcriptional repressor NrdR (175 aa).

A zinc finger spans residues 3–32 (CPYCSHPDSKVIDSRDVDDGVRRRRECVVC). The ATP-cone domain maps to 47 to 137 (LFVVKKDQRR…VYREFTDITQ (91 aa)).

The protein belongs to the NrdR family. Requires Zn(2+) as cofactor.

Functionally, negatively regulates transcription of bacterial ribonucleotide reductase nrd genes and operons by binding to NrdR-boxes. This is Transcriptional repressor NrdR from Dehalococcoides mccartyi (strain CBDB1).